A 488-amino-acid polypeptide reads, in one-letter code: Pup--protein ligase (488 aa).

Position 34 (glutamate 34) interacts with Mg(2+). Arginine 77 contacts ATP. Position 79 (tyrosine 79) interacts with Mg(2+). The active-site Proton acceptor is the aspartate 81. Glutamate 87 lines the Mg(2+) pocket. Residues threonine 90 and tryptophan 453 each coordinate ATP.

It belongs to the Pup ligase/Pup deamidase family. Pup-conjugating enzyme subfamily.

It catalyses the reaction ATP + [prokaryotic ubiquitin-like protein]-L-glutamate + [protein]-L-lysine = ADP + phosphate + N(6)-([prokaryotic ubiquitin-like protein]-gamma-L-glutamyl)-[protein]-L-lysine.. The protein operates within protein degradation; proteasomal Pup-dependent pathway. Its pathway is protein modification; protein pupylation. In terms of biological role, catalyzes the covalent attachment of the prokaryotic ubiquitin-like protein modifier Pup to the proteasomal substrate proteins, thereby targeting them for proteasomal degradation. This tagging system is termed pupylation. The ligation reaction involves the side-chain carboxylate of the C-terminal glutamate of Pup and the side-chain amino group of a substrate lysine. The sequence is that of Pup--protein ligase from Bifidobacterium dentium (strain ATCC 27534 / DSM 20436 / JCM 1195 / Bd1).